An 87-amino-acid polypeptide reads, in one-letter code: Colicin-E7 immunity protein (87 aa).

This sequence belongs to the colicins ColE2/ColE8/ColE9 and pyocins S1/S2 family.

In terms of biological role, this protein is able to protect a cell, which harbors the plasmid ColE7 encoding colicin E7, against colicin E7, it binds specifically to the DNase-type colicin and inhibits its bactericidal activity. Dimeric ImmE7 may possess a RNase activity that cleaves its own mRNA at a specific site and thus autoregulates translational expression of the downstream ceiE7 gene as well as degradation of the upstream ceaE7 mRNA. In Escherichia coli, this protein is Colicin-E7 immunity protein (imm).